The primary structure comprises 214 residues: uncharacterized protein (214 aa).

The Response regulatory domain occupies 2-118; that stretch reads KIVIADDHHV…ELVKTRQVHG (117 aa). 4-aspartylphosphate is present on aspartate 53. The 66-residue stretch at 142-207 folds into the HTH luxR-type domain; it reads EKEKYYQLTR…QAALFAVKYN (66 aa). The segment at residues 166 to 185 is a DNA-binding region (H-T-H motif); it reads NKEIAAALFISEKTVKTHVS.

Post-translationally, phosphorylated by YhcY.

It is found in the cytoplasm. Functionally, member of the two-component regulatory system YhcY/YhcZ. This is an uncharacterized protein from Bacillus subtilis (strain 168).